The sequence spans 154 residues: UPF0178 protein Glov_0658 (154 aa).

Belongs to the UPF0178 family.

This Trichlorobacter lovleyi (strain ATCC BAA-1151 / DSM 17278 / SZ) (Geobacter lovleyi) protein is UPF0178 protein Glov_0658.